We begin with the raw amino-acid sequence, 524 residues long: Strychnine-10-hydroxylase (524 aa).

A helical transmembrane segment spans residues 6–26 (LYIHTAILGLISLFLILHFVF). Residue Cys-466 participates in heme binding.

Belongs to the cytochrome P450 family. Requires heme as cofactor.

The protein localises to the membrane. The enzyme catalyses strychnine + reduced [NADPH--hemoprotein reductase] + O2 = 10-hydroxystrychnine + oxidized [NADPH--hemoprotein reductase] + H2O + H(+). It functions in the pathway alkaloid biosynthesis. Functionally, monooxygenase involved in the biosynthesis of curare monoterpene indole alkaloids (MIAs), natural products such as strychnine, a neurotoxic compound used as a pesticide to control rodents, and its pharmacologically active derivatives, including brucine, used to regulate blood pressure. Curare alkaloids act as animal glycine receptor antagonists. Catalyzes the conversion of strychnine to 10-OH strychnine. The sequence is that of Strychnine-10-hydroxylase from Strychnos nux-vomica (Poison nut).